A 375-amino-acid polypeptide reads, in one-letter code: MIEADYLVIGAGIAGASTGYWLSAHGRVVVLEREAQPGYHSTGRSAAHYTVAYGTPQVRALTAASRAFFDNPPAGFCEHPLLSPRPEMVVDFSDDPEELRRQYESGKALVPQMRLLDAEQACSIVPVLRRDKVFGATYDPTGADIDTDALHQGYLRGIRRNQGQVLCNHEALEIRRVDGAWEVRCDAGSYRAAVLVNAAGAWCDAIAGLAGVRPLGLQPKRRSAFIFAPPPGIDCHDWPMLVSLDESFYLKPDAGMLLGSPANADPVEAHDVQPEQLDIATGMYLIEEATTLTIRRPEHTWAGLRSFVADGDLVAGYAANAEGFFWVAAQGGYGIQTSAAMGEASAALIRHQPLPAHLREHGLDEAMLSPRRLSP.

Residues alanine 14, 32–33 (ER), 41–48 (STGRSAAH), alanine 171, and 331–336 (GGYGIQ) contribute to the FAD site.

The protein belongs to the FAD-dependent glycerol-3-phosphate dehydrogenase family. In terms of assembly, monomer. The cofactor is FAD.

The enzyme catalyses D-arginine + A + H2O = 5-guanidino-2-oxopentanoate + AH2 + NH4(+). It carries out the reaction a D-alpha-amino acid + A + H2O = a 2-oxocarboxylate + AH2 + NH4(+). With respect to regulation, inhibited by D-arginine and D-lysine at high concentration. Its function is as follows. DauA is highly expressed within the cystic fibrosis (CF) lung, and it is required for virulence via the optimal production of hydrogen cyanide, pyocyanine, pyoverdine, rhamnolipid and alginate during biofilm formation. Involved in the catabolism of D-lysine and D-arginine. Under aerobic conditions, the arginine succinyltransferase (AST) and arginine transaminase (ATA) pathways are 2 major routes for L-arginine utilization as the sole source of carbon and nitrogen. The D-to-L racemization of arginine by DauA and DauB is necessary, before to be channeled into the AST and/or ATA pathways. DauA catalyzes the flavin-dependent oxidative deamination of D-arginine into 2-ketoarginine (2-KA) and ammonia. It also has dehydrogenase activity towards D-lysine, D-tyrosine, D-methionine, D-phenylalanine, D-ornithine, D-histidine and D-leucine as substrates. This is FAD-dependent catabolic D-arginine dehydrogenase DauA from Pseudomonas aeruginosa (strain ATCC 15692 / DSM 22644 / CIP 104116 / JCM 14847 / LMG 12228 / 1C / PRS 101 / PAO1).